We begin with the raw amino-acid sequence, 313 residues long: Protein FixB (313 aa).

255–283 (LYLAVGISGQIQHMVGANASQTIFAINKD) is a binding site for FAD.

Belongs to the ETF alpha-subunit/FixB family. Heterodimer of FixA and FixB.

Its pathway is amine and polyamine metabolism; carnitine metabolism. Required for anaerobic carnitine reduction. May bring reductant to CaiA. The chain is Protein FixB from Escherichia coli O7:K1 (strain IAI39 / ExPEC).